Here is a 145-residue protein sequence, read N- to C-terminus: Maximins 3/H3 type 2 (145 aa).

The N-terminal stretch at 1–18 (MNFKYIVAVSFLIASAYA) is a signal peptide. Propeptides lie at residues 19–43 (RSVQNDEQSLSQRDVLEEEESLREI) and 74–124 (RTAE…KEKR). Residue isoleucine 144 is modified to Isoleucine amide.

This sequence belongs to the bombinin family. In terms of tissue distribution, expressed by the skin glands.

It localises to the secreted. Its function is as follows. Maximin-3 shows antibacterial activity against both Gram-positive and Gram-negative bacteria. It also shows antimicrobial activity against the fungus C.albicans, but not against A.flavus nor P.uticale. It has little hemolytic activity. It possess a significant cytotoxicity against tumor cell lines. It possess a significant anti-HIV activity. It shows high spermicidal activity. Functionally, maximin-H3 shows antibacterial activity against both Gram-positive and Gram-negative bacteria. It also shows antimicrobial activity against the fungus C.albicans. Shows strong hemolytic activity. This Bombina maxima (Giant fire-bellied toad) protein is Maximins 3/H3 type 2.